A 249-amino-acid polypeptide reads, in one-letter code: 5'-nucleotidase SurE (249 aa).

Positions 8, 9, 39, and 91 each coordinate a divalent metal cation.

The protein belongs to the SurE nucleotidase family. The cofactor is a divalent metal cation.

It is found in the cytoplasm. It carries out the reaction a ribonucleoside 5'-phosphate + H2O = a ribonucleoside + phosphate. Nucleotidase that shows phosphatase activity on nucleoside 5'-monophosphates. This is 5'-nucleotidase SurE from Stutzerimonas stutzeri (strain A1501) (Pseudomonas stutzeri).